Reading from the N-terminus, the 290-residue chain is MNSKSGYNRLFDPMAETGQALDFSQHGLGQKTVGNPFSAKAKMSVRNLNVYYDDKQAIHDVSLDINRNEVMAMIGPSGCGKSTFLRCLNRMNDTIENCSVNGEVTLDEQDIYHKKQDVVPLRARVGIVFQKPNPFPKSIYENVAYGPKVHGLVSRRAQLDEIVEDSLRKASLWDEVKDRLFSPGTGLSGGQQQRLCIARTIAVSPEVILMDEPCSALDPIATARIEELMAELSQNFTIAIVTHSMQQAARVSSRTAYFHMGRLIEVNDTRRVFTNPEHELTEAYITGRFG.

In terms of domain architecture, ABC transporter spans 43–285 (MSVRNLNVYY…PEHELTEAYI (243 aa)). 75–82 (GPSGCGKS) lines the ATP pocket.

This sequence belongs to the ABC transporter superfamily. Phosphate importer (TC 3.A.1.7) family. The complex is composed of two ATP-binding proteins (PstB), two transmembrane proteins (PstC and PstA) and a solute-binding protein (PstS).

It localises to the cell inner membrane. The enzyme catalyses phosphate(out) + ATP + H2O = ADP + 2 phosphate(in) + H(+). In terms of biological role, part of the ABC transporter complex PstSACB involved in phosphate import. Responsible for energy coupling to the transport system. In Pseudoalteromonas atlantica (strain T6c / ATCC BAA-1087), this protein is Phosphate import ATP-binding protein PstB.